Here is a 257-residue protein sequence, read N- to C-terminus: MIEFRNVSKVYPNGTKGLNNINLKIQKGEFVVMVGLSGAGKSTLLRSVNRLHEITEGEIMIEGESITAAKGKRLRRMRRDIGMIFQSFNLVKRSTVLKNVLAGRVGYHSTLRTTLGLFPKEDLELAFQSLKRVNILEKAYARADELSGGQQQRVSIARALAQEAKIILADEPVASLDPLTTKQVLDDLKKINEDFGITTIVNLHSIDLARQYATRIIGLHAGEIVFDGLVEEATDEKFAEIYGDVAQKSELLEVAVK.

One can recognise an ABC transporter domain in the interval 2–246 (IEFRNVSKVY…KFAEIYGDVA (245 aa)). 35–42 (GLSGAGKS) contacts ATP.

This sequence belongs to the ABC transporter superfamily. Phosphonates importer (TC 3.A.1.9.1) family. In terms of assembly, the complex is composed of two ATP-binding proteins (PhnC), two transmembrane proteins (PhnE) and a solute-binding protein (PhnD).

It is found in the cell membrane. The enzyme catalyses phosphonate(out) + ATP + H2O = phosphonate(in) + ADP + phosphate + H(+). Part of the ABC transporter complex PhnCDE involved in phosphonates import. Responsible for energy coupling to the transport system. The polypeptide is Phosphonates import ATP-binding protein PhnC (Bacillus thuringiensis subsp. konkukian (strain 97-27)).